A 1462-amino-acid polypeptide reads, in one-letter code: FYVE, RhoGEF and PH domain-containing protein 5 (1462 aa).

Disordered stretches follow at residues 37-323 (GRLP…SAEE), 492-512 (YVPE…APGI), 592-613 (SGSF…SSMV), 670-718 (HVDV…ASES), 746-777 (EDRS…YENI), and 851-887 (CPIS…THKV). Residues 72–82 (PLREDEPKDEG) are compositionally biased toward basic and acidic residues. Acidic residues-rich tracts occupy residues 95–106 (SAEEEEEREEGG) and 137–151 (EGTD…EGCA). Over residues 161–177 (SRSEEEEKLVQPHRECS) the composition is skewed to basic and acidic residues. 2 stretches are compositionally biased toward acidic residues: residues 211-220 (GEAEEDDEEG) and 242-255 (MGQD…EPPE). Residues 592–611 (SGSFSQRNHLPSSGTSTPSS) are compositionally biased toward polar residues. A compositionally biased stretch (low complexity) spans 676-685 (SSSRSSSESS). Positions 858–887 (PKEDLTSDEEQRSSEEEDSASRDPSVTHKV) are enriched in basic and acidic residues. In terms of domain architecture, DH spans 892-1084 (RALVIAQELL…SKVTDRANDS (193 aa)). Residues 1113 to 1207 (EFLKEGTLMK…WYGCLSRALP (95 aa)) form the PH 1 domain. The FYVE-type zinc finger occupies 1242–1301 (VTHVMMCMNCGCDFSLTLRRHHCHACGKIVCRNCSRNKYPLKYLKDRMAKVCDGCFGELK). C1248, C1251, C1264, C1267, C1272, C1275, C1293, and C1296 together coordinate Zn(2+). Positions 1363–1461 (GSAISGYLSR…WIEAMEDASV (99 aa)) constitute a PH 2 domain.

As to expression, expressed in endothelial cells (at protein level).

The protein resides in the cytoplasm. It localises to the cytoskeleton. The protein localises to the cell projection. Its subcellular location is the ruffle membrane. It is found in the endoplasmic reticulum. The protein resides in the golgi apparatus. It localises to the early endosome. Functionally, activates CDC42, a member of the Ras-like family of Rho- and Rac proteins, by exchanging bound GDP for free GTP. Mediates VEGF-induced CDC42 activation. May regulate proangiogenic action of VEGF in vascular endothelial cells, including network formation, directional movement and proliferation. May play a role in regulating the actin cytoskeleton and cell shape. This chain is FYVE, RhoGEF and PH domain-containing protein 5 (FGD5), found in Homo sapiens (Human).